Consider the following 51-residue polypeptide: Insulin (51 aa).

Intrachain disulfides connect Cys-8/Cys-37, Cys-20/Cys-50, and Cys-36/Cys-41.

This sequence belongs to the insulin family. As to quaternary structure, heterodimer of a B chain and an A chain linked by two disulfide bonds.

It is found in the secreted. In terms of biological role, insulin decreases blood glucose concentration. It increases cell permeability to monosaccharides, amino acids and fatty acids. It accelerates glycolysis, the pentose phosphate cycle, and glycogen synthesis in liver. The polypeptide is Insulin (ins) (Platichthys flesus (European flounder)).